The chain runs to 458 residues: Argininosuccinate lyase (458 aa).

Belongs to the lyase 1 family. Argininosuccinate lyase subfamily.

The protein resides in the cytoplasm. The catalysed reaction is 2-(N(omega)-L-arginino)succinate = fumarate + L-arginine. It participates in amino-acid biosynthesis; L-arginine biosynthesis; L-arginine from L-ornithine and carbamoyl phosphate: step 3/3. In Geobacter sp. (strain M21), this protein is Argininosuccinate lyase.